A 716-amino-acid polypeptide reads, in one-letter code: ATP-dependent DNA helicase DinG (716 aa).

Residues 17 to 294 (ALQEQIPDFI…TCMEQFRPKT (278 aa)) form the Helicase ATP-binding domain. An ATP-binding site is contributed by 54-61 (APTGVGKT). C120 contacts [4Fe-4S] cluster. The short motif at 131 to 134 (EPTQ) is the DEAH box element. [4Fe-4S] cluster-binding residues include C194, C199, and C205. The DEAH box motif lies at 248 to 251 (DEGH). In terms of domain architecture, Helicase C-terminal spans 517–698 (HIAEMAAFFR…VFPIEQPEVP (182 aa)).

The protein belongs to the helicase family. DinG subfamily. Type 1 sub-subfamily. It depends on [4Fe-4S] cluster as a cofactor.

It catalyses the reaction Couples ATP hydrolysis with the unwinding of duplex DNA at the replication fork by translocating in the 5'-3' direction. This creates two antiparallel DNA single strands (ssDNA). The leading ssDNA polymer is the template for DNA polymerase III holoenzyme which synthesizes a continuous strand.. The catalysed reaction is ATP + H2O = ADP + phosphate + H(+). In terms of biological role, DNA-dependent ATPase and 5'-3' DNA helicase. Unwinds D-loops, R-loops, forked DNA and G-quadruplex DNA. The chain is ATP-dependent DNA helicase DinG from Escherichia coli O6:H1 (strain CFT073 / ATCC 700928 / UPEC).